A 508-amino-acid polypeptide reads, in one-letter code: Matrix metalloproteinase-19 (508 aa).

The N-terminal stretch at 1–18 is a signal peptide; that stretch reads MNCQQLWLGFLLPMTVSG. A propeptide spanning residues 19-97 is cleaved from the precursor; it reads RVLGLAEVAP…EDPFNQKTLK (79 aa). The Cysteine switch signature appears at 83–90; that stretch reads PRCGLEDP. The Zn(2+) site is built by C85 and H212. E213 is a catalytic residue. H216 and H222 together coordinate Zn(2+). The segment at 262 to 288 is disordered; that stretch reads IRDEEEEETELPTVPPVPTEPSPMPDP. A compositionally biased stretch (pro residues) spans 274-287; it reads TVPPVPTEPSPMPD. 4 Hemopexin repeats span residues 286–333, 334–380, 381–425, and 426–472; these read PDPC…WEGL, PGNL…EPNL, DAAL…FTGV, and PNQP…WMHC. Cysteines 289 and 472 form a disulfide. An N-linked (GlcNAc...) asparagine glycan is attached at N464.

This sequence belongs to the peptidase M10A family. The cofactor is Zn(2+). Ca(2+) is required as a cofactor. Activated by autolytic cleavage after Lys-97. Post-translationally, tyrosine phosphorylated by PKDCC/VLK. As to expression, expressed in mammary gland, placenta, lung, pancreas, ovary, small intestine, spleen, thymus, prostate, testis colon, heart and blood vessel walls. Not detected in brain and peripheral blood leukocytes. Also expressed in the synovial fluid of normal and rheumatoid patients.

The protein localises to the secreted. The protein resides in the extracellular space. It localises to the extracellular matrix. Its activity is regulated as follows. Strongly inhibited by TIMP-2, TIMP-3 and TIMP-4, while TIMP-1 is less efficient. In terms of biological role, endopeptidase that degrades various components of the extracellular matrix, such as aggrecan and cartilage oligomeric matrix protein (comp), during development, haemostasis and pathological conditions (arthritic disease). May also play a role in neovascularization or angiogenesis. Hydrolyzes collagen type IV, laminin, nidogen, nascin-C isoform, fibronectin, and type I gelatin. In Homo sapiens (Human), this protein is Matrix metalloproteinase-19 (MMP19).